The following is a 70-amino-acid chain: Large ribosomal subunit protein eL38 (70 aa).

It belongs to the eukaryotic ribosomal protein eL38 family.

This is Large ribosomal subunit protein eL38 (RpL38) from Julodis onopordi (Jewel beetle).